The following is a 238-amino-acid chain: Ribonuclease PH (238 aa).

Residues Arg-86 and 124–126 (GTR) contribute to the phosphate site.

This sequence belongs to the RNase PH family. In terms of assembly, homohexameric ring arranged as a trimer of dimers.

The catalysed reaction is tRNA(n+1) + phosphate = tRNA(n) + a ribonucleoside 5'-diphosphate. Functionally, phosphorolytic 3'-5' exoribonuclease that plays an important role in tRNA 3'-end maturation. Removes nucleotide residues following the 3'-CCA terminus of tRNAs; can also add nucleotides to the ends of RNA molecules by using nucleoside diphosphates as substrates, but this may not be physiologically important. Probably plays a role in initiation of 16S rRNA degradation (leading to ribosome degradation) during starvation. This chain is Ribonuclease PH, found in Solibacter usitatus (strain Ellin6076).